We begin with the raw amino-acid sequence, 691 residues long: MRDPAFPGAAMAYHPFHAPRPADFPMSAFLAAAQPSFFPALTLPPAALGKPLSDPSLAGAAEAGLHLSALGHHHQAAHLRSLKSLEPEEEVDDDPKVNLEAKELWDQFHKIGTEMVITKSGRRMFPPFKVRVSGLDKKAKYILLMDIVAADDCRYKFHNSRWMVAGKADPEMPKRMYIHPDSPATGEQWMAKPVAFHKLKLTNNISDKHGFTILNSMHKYQPRFHIVRANDILKLPYSTFRTYVFPETDFIAVTAYQNDKITQLKIDHNPFAKGFRDTGNGRREKRKQLSLPSLRMYEEQCKADRDGAESDASSCDPAPGRDSLHSPLSAAPSPLRLHRTNREEKFGADSDQELDRREVRSARGHSPVGHRSPPSSPRLEDRGKDKSTPEKKSDSPESRKDGGSGGDSLFNSIRSLEKDKVESRRKEDSKSDPECGSLSKETYSPLMVQTESPPHLSASHLQSLAFSGLHGQQFFNPLNAGQPLFFHPGQFTMGPGAFSAMGMGHLLASMTGAGALDNGSLSSVQGASGAATPFPFHLSQHMLASQGIPMPAFGGLFPYPYTYMAAAAAAASAMPATSAATTMPRNPFLSSTRPRLRFNPYQIPVGIPPCSNLLTTGMPGSINPGSESSKPGSSRESSPIPDTPGHKRSHSKSLSPKASMKDSINELQRIQRLVSGLERQREVSPGRESPK.

A DNA-binding region (T-box) is located at residues 104–277; it reads LWDQFHKIGT…HNPFAKGFRD (174 aa). Disordered regions lie at residues 301 to 440 and 612 to 691; these read CKAD…SLSK and NLLT…ESPK. Over residues 325–335 the composition is skewed to low complexity; sequence HSPLSAAPSPL. Basic and acidic residues-rich tracts occupy residues 340-361, 378-402, and 415-433; these read TNREEKFGADSDQELDRREVRS, RLEDRGKDKSTPEKKSDSPESRKDG, and SLEKDKVESRRKEDSKSDP. Low complexity predominate over residues 624–639; the sequence is PGSESSKPGSSRESSP. Residues 659–684 are a coiled coil; it reads SMKDSINELQRIQRLVSGLERQREVS. A compositionally biased stretch (basic and acidic residues) spans 678 to 691; the sequence is ERQREVSPGRESPK.

Binds DNA as a monomer.

It is found in the nucleus. In terms of biological role, transcription factor which acts as a transcriptional repressor. May also function as a transcriptional activator. Binds to the palindromic T site 5'-TTCACACCTAGGTGTGAA-3' DNA sequence, or a half-site, which are present in the regulatory region of several genes. The protein is T-box transcription factor TBX2-B (tbx2-b) of Xenopus laevis (African clawed frog).